Reading from the N-terminus, the 291-residue chain is Phytanoyl-CoA dioxygenase domain-containing protein 1 (291 aa).

Residues Lys-102, Met-141, His-156–Asp-158, and Trp-174 contribute to the 2-oxoglutarate site. 2 residues coordinate Fe cation: His-156 and Asp-158. His-246 serves as a coordination point for Fe cation. 2-oxoglutarate contacts are provided by Ser-248 and Arg-257.

This sequence belongs to the PhyH family. PHYHD1 subfamily. Fe cation serves as cofactor.

2-oxoglutarate(2OG)-dependent dioxygenase that catalyzes the conversion of 2-oxoglutarate to succinate and CO(2) in an iron-dependent manner. However, does not couple 2OG turnover to the hydroxylation of acyl-coenzyme A derivatives, implying that it is not directly involved in phytanoyl coenzyme-A metabolism. Does not show detectable activity towards fatty acid CoA thioesters. In Danio rerio (Zebrafish), this protein is Phytanoyl-CoA dioxygenase domain-containing protein 1 (phyhd1).